Consider the following 166-residue polypeptide: Interferon gamma (166 aa).

Residues 1–23 form the signal peptide; that stretch reads MNYTSFILAFQLCAILGSSTYYC. A Pyrrolidone carboxylic acid modification is found at Gln-24. N-linked (GlcNAc...) asparagine glycosylation is found at Asn-39 and Asn-106. A disordered region spans residues 147 to 166; it reads ANLRKRKRSQNPFRGRRALQ. Positions 148–166 are enriched in basic residues; the sequence is NLRKRKRSQNPFRGRRALQ.

Belongs to the type II (or gamma) interferon family. In terms of assembly, homodimer. Interacts with IFNGR1 (via extracellular domain); this interaction promotes IFNGR1 dimerization. As to expression, released primarily from activated T lymphocytes.

Its subcellular location is the secreted. Its function is as follows. Type II interferon produced by immune cells such as T-cells and NK cells that plays crucial roles in antimicrobial, antiviral, and antitumor responses by activating effector immune cells and enhancing antigen presentation. Primarily signals through the JAK-STAT pathway after interaction with its receptor IFNGR1 to affect gene regulation. Upon IFNG binding, IFNGR1 intracellular domain opens out to allow association of downstream signaling components JAK2, JAK1 and STAT1, leading to STAT1 activation, nuclear translocation and transcription of IFNG-regulated genes. Many of the induced genes are transcription factors such as IRF1 that are able to further drive regulation of a next wave of transcription. Plays a role in class I antigen presentation pathway by inducing a replacement of catalytic proteasome subunits with immunoproteasome subunits. In turn, increases the quantity, quality, and repertoire of peptides for class I MHC loading. Increases the efficiency of peptide generation also by inducing the expression of activator PA28 that associates with the proteasome and alters its proteolytic cleavage preference. Up-regulates as well MHC II complexes on the cell surface by promoting expression of several key molecules such as cathepsins B/CTSB, H/CTSH, and L/CTSL. Participates in the regulation of hematopoietic stem cells during development and under homeostatic conditions by affecting their development, quiescence, and differentiation. This chain is Interferon gamma (IFNG), found in Equus caballus (Horse).